Reading from the N-terminus, the 257-residue chain is MVSSQEKMASISDIIQKDEDSGSEKTESQDKEHPRVLIPELCRLFYKLGWVTGTGGGISLRHGDQIYIAPSGVQKERLQPEDMFVCDVEERDICVPPAWKNLKKGQCTPLFMNAYTMRAAQAVIHTHSKAAVMATLFYPGKEFRITHQEMIKGIRKCTSGTNYRYDETLVVPIIENTPEEQDLKERMALAMEQYPESCAVLVRRHGVYVWGESWEKAKTMCECYDYLFDIAVKMKQCGLDPSAQPVEENLYYYVQQA.

Residues 1 to 33 (MVSSQEKMASISDIIQKDEDSGSEKTESQDKEH) form a disordered region. Basic and acidic residues predominate over residues 15–33 (IQKDEDSGSEKTESQDKEH). Substrate is bound at residue Cys107. Zn(2+)-binding residues include His125 and His127. Glu149 functions as the Proton donor/acceptor in the catalytic mechanism. His205 serves as a coordination point for Zn(2+).

This sequence belongs to the aldolase class II family. MtnB subfamily. It depends on Zn(2+) as a cofactor.

It localises to the cytoplasm. It catalyses the reaction 5-(methylsulfanyl)-D-ribulose 1-phosphate = 5-methylsulfanyl-2,3-dioxopentyl phosphate + H2O. It participates in amino-acid biosynthesis; L-methionine biosynthesis via salvage pathway; L-methionine from S-methyl-5-thio-alpha-D-ribose 1-phosphate: step 2/6. In terms of biological role, catalyzes the dehydration of methylthioribulose-1-phosphate (MTRu-1-P) into 2,3-diketo-5-methylthiopentyl-1-phosphate (DK-MTP-1-P). Functions in the methionine salvage pathway. May play a role in apoptosis. The polypeptide is Methylthioribulose-1-phosphate dehydratase (Esox lucius (Northern pike)).